A 142-amino-acid chain; its full sequence is Organic hydroperoxide resistance protein-like 2 (142 aa).

This sequence belongs to the OsmC/Ohr family.

This Staphylococcus epidermidis (strain ATCC 12228 / FDA PCI 1200) protein is Organic hydroperoxide resistance protein-like 2.